Reading from the N-terminus, the 463-residue chain is Cytoplasmic tRNA 2-thiolation protein 2 (463 aa).

Belongs to the CTU2/NCS2 family.

The protein resides in the cytoplasm. Its pathway is tRNA modification; 5-methoxycarbonylmethyl-2-thiouridine-tRNA biosynthesis. Functionally, plays a central role in 2-thiolation of mcm(5)S(2)U at tRNA wobble positions of tRNA(Lys), tRNA(Glu) and tRNA(Gln). May act by forming a heterodimer with NCS6 that ligates sulfur from thiocarboxylated URM1 onto the uridine of tRNAs at wobble position. Prior mcm(5) tRNA modification by the elongator complex is required for 2-thiolation. May also be involved in protein urmylation. This Kluyveromyces lactis (strain ATCC 8585 / CBS 2359 / DSM 70799 / NBRC 1267 / NRRL Y-1140 / WM37) (Yeast) protein is Cytoplasmic tRNA 2-thiolation protein 2.